Reading from the N-terminus, the 510-residue chain is NAD(P)H-quinone oxidoreductase subunit 2 B, chloroplastic (510 aa).

The next 13 helical transmembrane spans lie at Leu24–Leu44, Trp59–Trp79, Ile99–Ile119, Met124–Cys144, Leu149–Tyr169, Leu184–Leu204, Ile229–Phe249, Thr262–Phe284, Trp295–Ile315, Met323–Asp343, Tyr354–Leu374, Ala395–Phe415, and Leu418–Leu438.

Belongs to the complex I subunit 2 family. In terms of assembly, NDH is composed of at least 16 different subunits, 5 of which are encoded in the nucleus.

It localises to the plastid. Its subcellular location is the chloroplast thylakoid membrane. The catalysed reaction is a plastoquinone + NADH + (n+1) H(+)(in) = a plastoquinol + NAD(+) + n H(+)(out). It carries out the reaction a plastoquinone + NADPH + (n+1) H(+)(in) = a plastoquinol + NADP(+) + n H(+)(out). Functionally, NDH shuttles electrons from NAD(P)H:plastoquinone, via FMN and iron-sulfur (Fe-S) centers, to quinones in the photosynthetic chain and possibly in a chloroplast respiratory chain. The immediate electron acceptor for the enzyme in this species is believed to be plastoquinone. Couples the redox reaction to proton translocation, and thus conserves the redox energy in a proton gradient. The chain is NAD(P)H-quinone oxidoreductase subunit 2 B, chloroplastic from Lemna minor (Common duckweed).